A 558-amino-acid polypeptide reads, in one-letter code: Acylase ACY 1 proenzyme (558 aa).

The active-site Nucleophile is Thr368.

The protein belongs to the gamma-glutamyltransferase family. In terms of assembly, dimer of two non-identical chains processed from the same precursor.

It carries out the reaction (7R)-7-(4-carboxybutanamido)cephalosporanate + H2O = (7R)-7-aminocephalosporanate + glutarate. The enzyme catalyses an N-terminal (5-L-glutamyl)-[peptide] + an alpha-amino acid = 5-L-glutamyl amino acid + an N-terminal L-alpha-aminoacyl-[peptide]. The catalysed reaction is glutathione + H2O = L-cysteinylglycine + L-glutamate. It catalyses the reaction an S-substituted glutathione + H2O = an S-substituted L-cysteinylglycine + L-glutamate. Functionally, besides the cephalosporin acylase I activity which converts GL-7ACA into 7-ACA; this enzyme displays some gamma glutamyltranspeptidase activity. In Pseudomonas sp. (strain SE83), this protein is Acylase ACY 1 proenzyme (acyI).